The following is a 61-amino-acid chain: MDPNCSCATRDSCACASSCKCKECKCTSCKKSCCSCCPAGCTKCAQGCICKGASDKCSCCA.

Met-1 is subject to N-acetylmethionine. The beta stretch occupies residues Met-1–Cys-29. A divalent metal cation-binding residues include Cys-5, Cys-7, Cys-13, Cys-15, Cys-19, Cys-21, Cys-24, Cys-26, Cys-29, Cys-33, Cys-34, Cys-36, Cys-37, Cys-41, Cys-44, Cys-48, Cys-50, Cys-57, Cys-59, and Cys-60. The tract at residues Lys-30–Ala-61 is alpha.

Belongs to the metallothionein superfamily. Type 1 family. In terms of assembly, monomer.

Functionally, metallothioneins have a high content of cysteine residues that bind various heavy metals; these proteins are transcriptionally regulated by both heavy metals and glucocorticoids. The sequence is that of Metallothionein-2D from Oryctolagus cuniculus (Rabbit).